Here is a 906-residue protein sequence, read N- to C-terminus: Coatomer subunit beta' (906 aa).

WD repeat units lie at residues 13 to 52 (ARSD…LVKT), 55 to 94 (VCDL…RVHM), 97 to 136 (AHSD…SCSQ), 140 to 180 (GHTH…PNFT), 183 to 224 (GHEK…CVQT), 227 to 266 (GHAQ…LEST), 350 to 388 (SCEI…NKSF), and 390 to 425 (SAQE…KSFK). Lysine 627 carries the post-translational modification N6-acetyllysine. The WD 9 repeat unit spans residues 746-783 (IRTGRLPEAAFLARTYLPSQVSRVVKLWRENLSKVNQK). The segment at 837–872 (EEAKGFQPSRSAAQQELDGKPASPTPVIVTSQTANK) is disordered. Serine 859 is subject to Phosphoserine. The residue at position 861 (threonine 861) is a Phosphothreonine. Residues 866–891 (TSQTANKEEKSLLELEVDLDNLEIED) are a coiled coil.

It belongs to the WD repeat COPB2 family. Oligomeric complex that consists of at least the alpha, beta, beta', gamma, delta, epsilon and zeta subunits. Probably interacts with PEX11A. Interacts with SCYL1. Interacts with JAGN1.

It localises to the cytoplasm. It is found in the cytosol. Its subcellular location is the golgi apparatus membrane. The protein resides in the cytoplasmic vesicle. The protein localises to the COPI-coated vesicle membrane. In terms of biological role, the coatomer is a cytosolic protein complex that binds to dilysine motifs and reversibly associates with Golgi non-clathrin-coated vesicles, which further mediate biosynthetic protein transport from the ER, via the Golgi up to the trans Golgi network. Coatomer complex is required for budding from Golgi membranes, and is essential for the retrograde Golgi-to-ER transport of dilysine-tagged proteins. In mammals, the coatomer can only be recruited by membranes associated to ADP-ribosylation factors (ARFs), which are small GTP-binding proteins; the complex also influences the Golgi structural integrity, as well as the processing, activity, and endocytic recycling of LDL receptors. This coatomer complex protein, essential for Golgi budding and vesicular trafficking, is a selective binding protein (RACK) for protein kinase C, epsilon type. It binds to Golgi membranes in a GTP-dependent manner. In Bos taurus (Bovine), this protein is Coatomer subunit beta' (COPB2).